The following is a 969-amino-acid chain: MADDATTARDYRETVFLPDTPFPMRAGLPKKEPEILEGWAALSEKGLYGAVRQKRQAAGAPLFVFHDGPPYANGAIHIGHALNKILKDFVVRSRFALGYDVDYVPGWDCHGLPIEWKIEEQFRAKGRRKDEVPAEEFRRECRAYAGGWIEAQKTEFQRLGVLGDWWNRYATMDFTSEAKIVEEFHKFLATGQLYRGSKPVMWSPVERTALADAEIEYHDHVSPTIWVKFPVVQGSDAAVGAKLVIWTTTPWTIPANRAVSYNPDIPYSVFEVTALEEGLEFEPWAKPGDRLIIADKLAEDVFKAAKVASWKTVEAVDCEGMVLAHPLADLDSHYGYAVPMLAGDHVTDDAGTGFVHTAPGHGADDYQVWLAHGHREIPDTVDPDGAYYPHVALFAGLKVLETEGKKVGKFGPANGAVMEKLIEAGNLLARGRVEHSYPHSWRSKAPVIFRNTPQWFIRMDHAVDSLDGKTLREVAVQAIADTAFYPDGGRNRIGAMVETRPDWLISRQRNWGTPLAMFVDKHTGHPLNDPEVNARILAAIREGGADAWFTRPDADFLGAHDPAQYEKITDILDVWFDSGCTHAFTIEGRADSAWPADLYLEGSDQHRGWFQSSLLEGCGTRGRAPYKAVVTHGFTMDENGEKMSKSRGNTIEPQTITKESGAEILRLWTAMVDYQEDQRIGKTILATTTDAYRKLRNTMRYLLGALAGFDEEERVTDYDQFPALEKYILHRLWELDGQVREAYQSYRFSDVIRPLIEFCQGDLSALYFDVRRDSLYCDRPDALKRRAYRTALDYVFDRLTIWLAPLASFTMEEAWTTRFPEAGPVAYRVMPERVDAWRNDAEAARWAKVEKVTSVVTGALEVERREKRIGSALEAAPVVHFADEDLLAAFEGLDAGEVFRTSSATLVAGDAGAFRVDEVKGVSVDPNKAEGKKCARSWRILPEVGTDPRYPELSLRDADAVAYWDAGRG.

The 'HIGH' region signature appears at 70-80 (PYANGAIHIGH). Glu-601 is a binding site for L-isoleucyl-5'-AMP. The 'KMSKS' region signature appears at 642–646 (KMSKS). Lys-645 serves as a coordination point for ATP.

This sequence belongs to the class-I aminoacyl-tRNA synthetase family. IleS type 1 subfamily. As to quaternary structure, monomer.

It is found in the cytoplasm. The catalysed reaction is tRNA(Ile) + L-isoleucine + ATP = L-isoleucyl-tRNA(Ile) + AMP + diphosphate. Functionally, catalyzes the attachment of isoleucine to tRNA(Ile). As IleRS can inadvertently accommodate and process structurally similar amino acids such as valine, to avoid such errors it has two additional distinct tRNA(Ile)-dependent editing activities. One activity is designated as 'pretransfer' editing and involves the hydrolysis of activated Val-AMP. The other activity is designated 'posttransfer' editing and involves deacylation of mischarged Val-tRNA(Ile). The chain is Isoleucine--tRNA ligase from Caulobacter vibrioides (strain ATCC 19089 / CIP 103742 / CB 15) (Caulobacter crescentus).